The sequence spans 626 residues: DNA polymerase 2 (626 aa).

The protein belongs to the DNA polymerase type-B family.

The enzyme catalyses DNA(n) + a 2'-deoxyribonucleoside 5'-triphosphate = DNA(n+1) + diphosphate. Functionally, this polymerase is devoid of exonuclease activity. This chain is DNA polymerase 2 (dpo2), found in Saccharolobus solfataricus (strain ATCC 35092 / DSM 1617 / JCM 11322 / P2) (Sulfolobus solfataricus).